A 274-amino-acid polypeptide reads, in one-letter code: Glutamate racemase (274 aa).

Residues aspartate 10–serine 11 and tyrosine 42–glycine 43 contribute to the substrate site. Cysteine 73 functions as the Proton donor/acceptor in the catalytic mechanism. Residue asparagine 74–threonine 75 coordinates substrate. The active-site Proton donor/acceptor is the cysteine 184. A substrate-binding site is contributed by threonine 185–histidine 186.

Belongs to the aspartate/glutamate racemases family.

The enzyme catalyses L-glutamate = D-glutamate. It participates in cell wall biogenesis; peptidoglycan biosynthesis. Functionally, provides the (R)-glutamate required for cell wall biosynthesis. The protein is Glutamate racemase of Latilactobacillus sakei subsp. sakei (strain 23K) (Lactobacillus sakei subsp. sakei).